Reading from the N-terminus, the 559-residue chain is 2-isopropylmalate synthase (559 aa).

In terms of domain architecture, Pyruvate carboxyltransferase spans 33 to 307; the sequence is PIWCSSDLRD…NPELDFSDID (275 aa). Residues Asp42, His246, His248, and Asn282 each coordinate Mg(2+). Positions 439–559 are regulatory domain; sequence ANTPYALVSH…SLSEQQAKAA (121 aa).

This sequence belongs to the alpha-IPM synthase/homocitrate synthase family. LeuA type 2 subfamily. Homodimer. The cofactor is Mg(2+).

The protein resides in the cytoplasm. The enzyme catalyses 3-methyl-2-oxobutanoate + acetyl-CoA + H2O = (2S)-2-isopropylmalate + CoA + H(+). It functions in the pathway amino-acid biosynthesis; L-leucine biosynthesis; L-leucine from 3-methyl-2-oxobutanoate: step 1/4. Its function is as follows. Catalyzes the condensation of the acetyl group of acetyl-CoA with 3-methyl-2-oxobutanoate (2-ketoisovalerate) to form 3-carboxy-3-hydroxy-4-methylpentanoate (2-isopropylmalate). The sequence is that of 2-isopropylmalate synthase from Pseudomonas fluorescens (strain ATCC BAA-477 / NRRL B-23932 / Pf-5).